The following is a 264-amino-acid chain: tRNA pseudouridine synthase A (264 aa).

The active-site Nucleophile is the D51. Position 109 (Y109) interacts with substrate.

It belongs to the tRNA pseudouridine synthase TruA family. Homodimer.

The enzyme catalyses uridine(38/39/40) in tRNA = pseudouridine(38/39/40) in tRNA. Functionally, formation of pseudouridine at positions 38, 39 and 40 in the anticodon stem and loop of transfer RNAs. The sequence is that of tRNA pseudouridine synthase A from Staphylococcus aureus (strain MRSA252).